We begin with the raw amino-acid sequence, 300 residues long: Glycine betaine/carnitine transport binding protein GbuC (300 aa).

An N-terminal signal peptide occupies residues 1 to 20; it reads MLKKLITTAVLAMLIFTLAA. The N-palmitoyl cysteine moiety is linked to residue Cys21. Cys21 carries S-diacylglycerol cysteine lipidation.

In terms of assembly, the complex is composed of two ATP-binding proteins (GbuA), two transmembrane proteins (GbuB) and a solute-binding protein (GbuC).

It is found in the cell membrane. Its activity is regulated as follows. The complex is activated by an osmotic gradient or by low temperature. Its function is as follows. Part of the ABC transporter complex GbuABC involved in glycine betaine uptake. Involved, with BetL and OpuC, in osmoprotection and cryoprotection of Listeria. Can also uptake carnitine when carnitine is abundant in the growth medium. In Listeria monocytogenes serotype 1/2a (strain 10403S), this protein is Glycine betaine/carnitine transport binding protein GbuC (gbuC).